The sequence spans 122 residues: Large ribosomal subunit protein uL14 (122 aa).

This sequence belongs to the universal ribosomal protein uL14 family. In terms of assembly, part of the 50S ribosomal subunit. Forms a cluster with proteins L3 and L19. In the 70S ribosome, L14 and L19 interact and together make contacts with the 16S rRNA in bridges B5 and B8.

Its function is as follows. Binds to 23S rRNA. Forms part of two intersubunit bridges in the 70S ribosome. The sequence is that of Large ribosomal subunit protein uL14 from Orientia tsutsugamushi (strain Boryong) (Rickettsia tsutsugamushi).